Reading from the N-terminus, the 215-residue chain is MRVILLGAPGAGKGTQARFITERFGIPQISTGDMLRAAVKAGSPLGLKVKGVMDSGGLVSDDIIIDLIRERIAQPDCARGFLFDGFPRTIPQAEALRDAGVSIDHVLEIAVDDEEIVSRMAGRRVHAASGRVYHDLHNPPKVAGKDDETGEDLIQREDDKEETVRHRLALYHSQTKPLVDFYQRLAATTGTPRYTRVEGIGSVSEITARVQAALA.

10–15 (GAGKGT) is an ATP binding site. An NMP region spans residues 30 to 59 (STGDMLRAAVKAGSPLGLKVKGVMDSGGLV). AMP contacts are provided by residues Thr-31, Arg-36, 57–59 (GLV), 85–88 (GFPR), and Gln-92. Residues 122–159 (GRRVHAASGRVYHDLHNPPKVAGKDDETGEDLIQREDD) form an LID region. ATP-binding positions include Arg-123 and 132–133 (VY). Arg-156 and Arg-167 together coordinate AMP. Gly-201 is a binding site for ATP.

Belongs to the adenylate kinase family. In terms of assembly, monomer.

Its subcellular location is the cytoplasm. It carries out the reaction AMP + ATP = 2 ADP. It functions in the pathway purine metabolism; AMP biosynthesis via salvage pathway; AMP from ADP: step 1/1. Catalyzes the reversible transfer of the terminal phosphate group between ATP and AMP. Plays an important role in cellular energy homeostasis and in adenine nucleotide metabolism. This chain is Adenylate kinase, found in Azotobacter vinelandii (strain DJ / ATCC BAA-1303).